Here is a 1322-residue protein sequence, read N- to C-terminus: Myosin-1 (1322 aa).

In terms of domain architecture, Myosin motor spans 42 to 728 (AGVSDMTLLT…TLFALETMRD (687 aa)). 135–142 (GESGAGKT) contributes to the ATP binding site. Ser369 is modified (phosphoserine). The segment at 417–499 (VIGVLDIYGF…PGIFSALNDA (83 aa)) is actin-binding. IQ domains lie at 732 to 752 (HNMAMRIQRAWRAFMRRREES) and 753 to 778 (ARRIQRAWRRSREGHEFLELREYGHQ). Positions 786–980 (RRRFSLISMR…SGEPPTSVSR (195 aa)) constitute a TH1 domain. 2 disordered regions span residues 966 to 1090 (IVSV…MPSY) and 1137 to 1162 (VQQLGSSSTAQTRSVPAPPSASATPA). 2 stretches are compositionally biased toward low complexity: residues 1000–1017 (SRPVTSRRPVPTVLPTTT) and 1027–1056 (GGTASASALAVPTTSTVAPASSASGNASGA). Composition is skewed to polar residues over residues 1078-1087 (PATSAPSSGM) and 1137-1148 (VQQLGSSSTAQT). Residues 1184 to 1243 (RRLPRYRALYDFETQEAGELPLRTGDIVELEEKEENGWWLVKKGSTEGWSPADYLELIAE) form the SH3 domain. Residues 1246–1300 (AAKPRPPPPAKPASAKPAAAPARVSQSSVTSSWTPPDSHAAPVAVMPGMGDPGGF) are disordered. A compositionally biased stretch (low complexity) spans 1257 to 1267 (PASAKPAAAPA). The span at 1269–1280 (VSQSSVTSSWTP) shows a compositional bias: polar residues.

The protein belongs to the TRAFAC class myosin-kinesin ATPase superfamily. Myosin family. Phosphorylation of the TEDS site (Ser-369) is required for the polarization of the actin cytoskeleton. Phosphorylation probably activates the myosin-I ATPase activity.

The protein localises to the cytoplasm. The protein resides in the cytoskeleton. It is found in the actin patch. Type-I myosin implicated in the organization of the actin cytoskeleton. Required for proper actin cytoskeleton polarization. At the cell cortex, assembles in patch-like structures together with proteins from the actin-polymerizing machinery and promotes actin assembly. Functions as actin nucleation-promoting factor (NPF) for the Arp2/3 complex. This chain is Myosin-1 (MYO1), found in Malassezia globosa (strain ATCC MYA-4612 / CBS 7966) (Dandruff-associated fungus).